A 429-amino-acid chain; its full sequence is Dual-specificity RNA methyltransferase RlmN (429 aa).

The disordered stretch occupies residues 1–23 (MRAMQTHTEIAPMPIPGHVDPVP). Residue E128 is the Proton acceptor of the active site. Residues 134 to 397 (DADRGTLCVS…APVRTPRGRD (264 aa)) form the Radical SAM core domain. Residues C141 and C402 are joined by a disulfide bond. Residues C148, C152, and C155 each coordinate [4Fe-4S] cluster. S-adenosyl-L-methionine contacts are provided by residues 226–227 (GE), S258, 280–282 (SLH), and N359. C402 serves as the catalytic S-methylcysteine intermediate.

Belongs to the radical SAM superfamily. RlmN family. [4Fe-4S] cluster is required as a cofactor.

The protein localises to the cytoplasm. The catalysed reaction is adenosine(2503) in 23S rRNA + 2 reduced [2Fe-2S]-[ferredoxin] + 2 S-adenosyl-L-methionine = 2-methyladenosine(2503) in 23S rRNA + 5'-deoxyadenosine + L-methionine + 2 oxidized [2Fe-2S]-[ferredoxin] + S-adenosyl-L-homocysteine. It catalyses the reaction adenosine(37) in tRNA + 2 reduced [2Fe-2S]-[ferredoxin] + 2 S-adenosyl-L-methionine = 2-methyladenosine(37) in tRNA + 5'-deoxyadenosine + L-methionine + 2 oxidized [2Fe-2S]-[ferredoxin] + S-adenosyl-L-homocysteine. Functionally, specifically methylates position 2 of adenine 2503 in 23S rRNA and position 2 of adenine 37 in tRNAs. m2A2503 modification seems to play a crucial role in the proofreading step occurring at the peptidyl transferase center and thus would serve to optimize ribosomal fidelity. This chain is Dual-specificity RNA methyltransferase RlmN, found in Novosphingobium aromaticivorans (strain ATCC 700278 / DSM 12444 / CCUG 56034 / CIP 105152 / NBRC 16084 / F199).